Here is a 511-residue protein sequence, read N- to C-terminus: MNTQAILVLDFGSQYSQLIARRIREIGVYTKVIPYYTPLKEIKNMNISGIILSGSPASVYSKEAPTLNMEIFNLKIPILGICYGMQIIVKLFGGLVSKDSKQEYGSSEIFLRDEKSLLFSELPNKFQIIMSHGDSIEKIPDNFKQLAFTKNCIASISNETQKIYGLQFHPEVTHSEFGDQIIKNFVFKICQAQINWSLEGNLETIVKKIKLKVGSKKVILGLSGGTDSLVCALLIKKAINENLICVFVNTGLLRKNEDKKILELKHQYDLNIKYIDASTKFLNRLKNISDPEEKRKIIGKEFVDVFEKITLEDQNIEYLAQGTIYSDVIESKSKDSSSSKIKSHHNVGGLPDKMSLKLLEPLNEFFKDEIIQIGINLGIKKESLYRHPFPGPGLAIRIIGEVTQEKINILQEADNILTEELFINDLYYQIRQAFVVLLPVKSVGVMGDQRTYEYTAVIRCVNTQDFMTAEWTELPYSFLKKVSSRIINEVRGINRVCYDISSKPPSTIEWE.

The 191-residue stretch at 5–195 (AILVLDFGSQ…VFKICQAQIN (191 aa)) folds into the Glutamine amidotransferase type-1 domain. The active-site Nucleophile is the Cys-82. Residues His-169 and Glu-171 contribute to the active site. The region spanning 196–386 (WSLEGNLETI…LGIKKESLYR (191 aa)) is the GMPS ATP-PPase domain. 223–229 (SGGTDSL) contributes to the ATP binding site.

In terms of assembly, homodimer.

The catalysed reaction is XMP + L-glutamine + ATP + H2O = GMP + L-glutamate + AMP + diphosphate + 2 H(+). It participates in purine metabolism; GMP biosynthesis; GMP from XMP (L-Gln route): step 1/1. Catalyzes the synthesis of GMP from XMP. The polypeptide is GMP synthase [glutamine-hydrolyzing] (guaA) (Borreliella burgdorferi (strain ATCC 35210 / DSM 4680 / CIP 102532 / B31) (Borrelia burgdorferi)).